The chain runs to 165 residues: Large ribosomal subunit protein uL11 (165 aa).

This sequence belongs to the universal ribosomal protein uL11 family.

Its function is as follows. Binds directly to 26S ribosomal RNA. The protein is Large ribosomal subunit protein uL11 (rpl-12) of Caenorhabditis briggsae.